Reading from the N-terminus, the 167-residue chain is Phosphorelay intermediate protein YPD1 (167 aa).

Positions 24-129 constitute an HPt domain; the sequence is DSDFSKGLII…DDEEIKIQVD (106 aa). A Phosphohistidine modification is found at H64.

The protein belongs to the YPD1 family. Interacts with the response regulatory domains of SLN1 and SSK1. The phosphorelay mechanism involves the sequential transfer of a phosphate group from 'His-576' (H1) to 'Asp-1144' (D1) of SLN1, then to His-64 (H2) of YPD1 and finally to 'Asp-554' (D2) of SSK1 or 'Asp-427' (D2) of SKN7.

The protein localises to the cytoplasm. It is found in the nucleus. Phosphorelay intermediate protein that is part of the branched SLN1-YPD1-SKN7/SSK1 two-component regulatory system, which controls activity of the HOG1 pathway and gene expression in response to changes in the osmolarity of the extracellular environment. Catalyzes the phosphoryl group transfer from the membrane-bound osmosensing histidine kinase SLN1 to two distinct response regulator proteins, SSK1 in the cytoplasm, and transcription factor SKN7 in the nucleus. This chain is Phosphorelay intermediate protein YPD1 (YPD1), found in Saccharomyces cerevisiae (strain ATCC 204508 / S288c) (Baker's yeast).